Reading from the N-terminus, the 286-residue chain is Sulfate transport system permease protein CysT (286 aa).

7 consecutive transmembrane segments (helical) span residues 27 to 47, 74 to 94, 108 to 128, 146 to 166, 195 to 215, 224 to 244, and 257 to 276; these read WVVTIIYLLLILVLPIAALLV, FITALAAGLVNGVMGTLVAWV, AMVDLPFALPTSVAGLVLATL, IAFSRLGVFVAMVFISLPFIV, FWRVIFPPLIPPILTGIALGF, SVVLIASNIPFKDLIAPVLVF, and VIGAVLLSVSLILLLIINLL. An ABC transmembrane type-1 domain is found at 70–273; sequence YNVTFITALA…SVSLILLLII (204 aa).

Belongs to the binding-protein-dependent transport system permease family. CysTW subfamily. As to quaternary structure, the complex is composed of two ATP-binding proteins (CysA), two transmembrane proteins (CysT and CysW) and a solute-binding protein (CysP).

It is found in the cell inner membrane. Functionally, part of the ABC transporter complex CysAWTP (TC 3.A.1.6.1) involved in sulfate/thiosulfate import. Probably responsible for the translocation of the substrate across the membrane. This chain is Sulfate transport system permease protein CysT (cysT), found in Synechocystis sp. (strain ATCC 27184 / PCC 6803 / Kazusa).